The primary structure comprises 227 residues: Transcriptional regulatory protein CusR (227 aa).

The region spanning Lys-2 to Leu-116 is the Response regulatory domain. 4-aspartylphosphate is present on Asp-51. Residues Glu-125–Val-223 constitute a DNA-binding region (ompR/PhoB-type).

In terms of processing, phosphorylated by CusS.

The protein resides in the cytoplasm. Member of the two-component regulatory system CusS/CusR involved in response to copper and silver. The protein is Transcriptional regulatory protein CusR (cusR) of Escherichia coli O6:H1 (strain CFT073 / ATCC 700928 / UPEC).